Here is a 589-residue protein sequence, read N- to C-terminus: Phenylalanine--tRNA ligase beta subunit (589 aa).

In terms of domain architecture, B5 spans leucine 302–methionine 379. Mg(2+)-binding residues include aspartate 357, aspartate 363, glutamate 366, and aspartate 367.

This sequence belongs to the phenylalanyl-tRNA synthetase beta subunit family. Type 2 subfamily. Heterotetramer; dimer of two heterodimers formed by FARSA and FARSB. It depends on Mg(2+) as a cofactor.

It is found in the cytoplasm. The enzyme catalyses tRNA(Phe) + L-phenylalanine + ATP = L-phenylalanyl-tRNA(Phe) + AMP + diphosphate + H(+). The polypeptide is Phenylalanine--tRNA ligase beta subunit (FARSB) (Pongo abelii (Sumatran orangutan)).